The sequence spans 118 residues: LYR motif containing protein 1 (118 aa).

Residues 91 to 118 are disordered; sequence TQKGRKLRAQQRLRKQAKPVYLQSQDET. Positions 93-107 are enriched in basic residues; sequence KGRKLRAQQRLRKQA.

Belongs to the complex I LYR family.

The chain is LYR motif containing protein 1 (lyrm1) from Danio rerio (Zebrafish).